The primary structure comprises 428 residues: tRNA(Ile)-lysidine synthase (428 aa).

28-33 (SGGVDS) provides a ligand contact to ATP.

This sequence belongs to the tRNA(Ile)-lysidine synthase family.

Its subcellular location is the cytoplasm. The enzyme catalyses cytidine(34) in tRNA(Ile2) + L-lysine + ATP = lysidine(34) in tRNA(Ile2) + AMP + diphosphate + H(+). In terms of biological role, ligates lysine onto the cytidine present at position 34 of the AUA codon-specific tRNA(Ile) that contains the anticodon CAU, in an ATP-dependent manner. Cytidine is converted to lysidine, thus changing the amino acid specificity of the tRNA from methionine to isoleucine. This Streptococcus pyogenes serotype M3 (strain ATCC BAA-595 / MGAS315) protein is tRNA(Ile)-lysidine synthase.